Consider the following 466-residue polypeptide: Ceramide glucosyltransferase 1 (466 aa).

A helical transmembrane segment spans residues 70–90 (LALSGCIFVSVLYLVHIIAFF). Asp148 is a short sequence motif (D1). Asp200 is a short sequence motif (D2). Asp294 is a short sequence motif (D3). Residue Asp294 is the Proton acceptor of the active site. The (Q/R)XXRW signature appears at 330 to 334 (RIGRW). The next 2 helical transmembrane spans lie at 354 to 374 (CVTS…YSVY) and 403 to 423 (TPFL…FIFI).

The protein belongs to the glycosyltransferase 2 family. In terms of tissue distribution, expressed in excretory canals, pharyngeal intestinal valve, intestine and intestinal rectal valve.

It is found in the membrane. It carries out the reaction an N-acylsphing-4-enine + UDP-alpha-D-glucose = a beta-D-glucosyl-(1&lt;-&gt;1')-N-acylsphing-4-enine + UDP + H(+). The catalysed reaction is an N-acyl-15-methylhexadecasphing-4-enine + UDP-alpha-D-glucose = an N-acyl-1-beta-D-glucosyl-15-methylhexadecasphing-4-enine + UDP + H(+). The protein operates within lipid metabolism; sphingolipid metabolism. Its function is as follows. Catalyzes the first glycosylation step in glycosphingolipid biosynthesis, the transfer of glucose to ceramide to produce glucosylceramides (GlcCer). GlcCer are known to contribute to the physical properties and physiological functions of membranes and may regulate signal transduction. Only branched-chain sphingoid bases like 15-methylhexadecasphing-4-enine are used for generating complex sphingolipids in Caenorhabditis elegans. Together with cgt-3, plays a role in the trafficking of proteins such as mig-14 to the cell membrane in intestinal cells. The polypeptide is Ceramide glucosyltransferase 1 (Caenorhabditis elegans).